Reading from the N-terminus, the 86-residue chain is Small ribosomal subunit protein bS16 (86 aa).

Belongs to the bacterial ribosomal protein bS16 family.

The chain is Small ribosomal subunit protein bS16 from Methylibium petroleiphilum (strain ATCC BAA-1232 / LMG 22953 / PM1).